Reading from the N-terminus, the 217-residue chain is Glycosylphosphatidylinositol anchor biosynthesis protein 11 (217 aa).

Asparagine 20 carries N-linked (GlcNAc...) asparagine glycosylation. Helical transmembrane passes span 41 to 61, 66 to 86, 107 to 127, 139 to 159, 169 to 189, and 197 to 217; these read VYVRKSWTLIPFHLLALLYWF, DFNLLALLYIMIPTQVIYLIF, FITLGACLLLSIPCLAIIVLF, WLLALHCCFLTYPAVYDVFNC, YFISVVIGCWISCFVIPLDWD, and VPLIVGAYLGSFIGFSIGGYI.

It belongs to the PIGF family.

It is found in the endoplasmic reticulum membrane. Its pathway is glycolipid biosynthesis; glycosylphosphatidylinositol-anchor biosynthesis. Acts in the GPI biosynthetic pathway between GlcNAc-PI synthesis and GPI transfer to protein. This chain is Glycosylphosphatidylinositol anchor biosynthesis protein 11 (GPI11), found in Kluyveromyces lactis (strain ATCC 8585 / CBS 2359 / DSM 70799 / NBRC 1267 / NRRL Y-1140 / WM37) (Yeast).